Consider the following 182-residue polypeptide: Peptidoglycan-recognition protein SB2 (182 aa).

A signal peptide spans 1 to 17; the sequence is MKLQLALVLCGLTLALG. The 126-residue stretch at 40-165 folds into the N-acetylmuramoyl-L-alanine amidase domain; sequence PVRLIIIHHT…CQTKATACPG (126 aa). Zn(2+) is bound at residue His-47. Residues Cys-54 and Cys-60 are joined by a disulfide bond. An N-linked (GlcNAc...) asparagine glycan is attached at Asn-149. Zn(2+) is bound by residues His-155 and Cys-163.

The protein belongs to the N-acetylmuramoyl-L-alanine amidase 2 family. It depends on Zn(2+) as a cofactor.

The protein resides in the secreted. The enzyme catalyses Hydrolyzes the link between N-acetylmuramoyl residues and L-amino acid residues in certain cell-wall glycopeptides.. N-acetylmuramyl-L-alanine amidase involved in innate immunity by degrading bacterial peptidoglycans (PGN). Probably plays a scavenger role by digesting biologically active PGN into biologically inactive fragments. Has no direct bacteriolytic activity. This Drosophila melanogaster (Fruit fly) protein is Peptidoglycan-recognition protein SB2 (PGRP-SB2).